Here is a 320-residue protein sequence, read N- to C-terminus: Zinc finger protein 330 (320 aa).

Positions 1-23 are disordered; the sequence is MPKKKTGARKKAENRREREKQLR. Positions 3-11 match the Nuclear localization signal motif; sequence KKKTGARKK. Positions 10-22 are enriched in basic and acidic residues; that stretch reads KKAENRREREKQL. 4 consecutive C4-type zinc fingers follow at residues 42–58, 67–104, 129–149, and 175–189; these read CDKC…CYFC, CAQC…CDFC, CVEC…CSFC, and CVSC…CLRC. 2 disordered regions span residues 206–250 and 264–303; these read EKGK…ASGY and GASY…TNLN. The segment covering 216–225 has biased composition (basic and acidic residues); it reads CGHETQETKD. The span at 269 to 287 shows a compositional bias: acidic residues; sequence DEEEDEYEAEDDEEEEDEG. S291 is modified (phosphoserine).

It belongs to the NOA36 family.

The protein localises to the nucleus. It is found in the nucleolus. The protein resides in the chromosome. It localises to the centromere. The sequence is that of Zinc finger protein 330 (ZNF330) from Bos taurus (Bovine).